Reading from the N-terminus, the 147-residue chain is 6,7-dimethyl-8-ribityllumazine synthase (147 aa).

5-amino-6-(D-ribitylamino)uracil contacts are provided by residues Phe16, 48-50 (TFD), and 73-75 (AVI). 78-79 (DT) is a binding site for (2S)-2-hydroxy-3-oxobutyl phosphate. His81 functions as the Proton donor in the catalytic mechanism. Residue Leu106 coordinates 5-amino-6-(D-ribitylamino)uracil. Residue Arg121 coordinates (2S)-2-hydroxy-3-oxobutyl phosphate.

The protein belongs to the DMRL synthase family.

The catalysed reaction is (2S)-2-hydroxy-3-oxobutyl phosphate + 5-amino-6-(D-ribitylamino)uracil = 6,7-dimethyl-8-(1-D-ribityl)lumazine + phosphate + 2 H2O + H(+). Its pathway is cofactor biosynthesis; riboflavin biosynthesis; riboflavin from 2-hydroxy-3-oxobutyl phosphate and 5-amino-6-(D-ribitylamino)uracil: step 1/2. In terms of biological role, catalyzes the formation of 6,7-dimethyl-8-ribityllumazine by condensation of 5-amino-6-(D-ribitylamino)uracil with 3,4-dihydroxy-2-butanone 4-phosphate. This is the penultimate step in the biosynthesis of riboflavin. This is 6,7-dimethyl-8-ribityllumazine synthase from Aeropyrum pernix (strain ATCC 700893 / DSM 11879 / JCM 9820 / NBRC 100138 / K1).